The chain runs to 255 residues: Aliphatic sulfonates import ATP-binding protein SsuB (255 aa).

In terms of domain architecture, ABC transporter spans 12–233; that stretch reads LLLNAVSKHY…RLGSVRLAEL (222 aa). An ATP-binding site is contributed by 44–51; it reads GRSGGGKS.

It belongs to the ABC transporter superfamily. Aliphatic sulfonates importer (TC 3.A.1.17.2) family. The complex is composed of two ATP-binding proteins (SsuB), two transmembrane proteins (SsuC) and a solute-binding protein (SsuA).

The protein localises to the cell inner membrane. It catalyses the reaction ATP + H2O + aliphatic sulfonate-[sulfonate-binding protein]Side 1 = ADP + phosphate + aliphatic sulfonateSide 2 + [sulfonate-binding protein]Side 1.. Its function is as follows. Part of the ABC transporter complex SsuABC involved in aliphatic sulfonates import. Responsible for energy coupling to the transport system. This Shigella flexneri serotype 5b (strain 8401) protein is Aliphatic sulfonates import ATP-binding protein SsuB.